The primary structure comprises 202 residues: Outer-membrane lipoprotein carrier protein (202 aa).

Positions 1-18 (MNKLFLILLLIFSHEVFS) are cleaved as a signal peptide.

The protein belongs to the LolA family. In terms of assembly, monomer.

It is found in the periplasm. Functionally, participates in the translocation of lipoproteins from the inner membrane to the outer membrane. Only forms a complex with a lipoprotein if the residue after the N-terminal Cys is not an aspartate (The Asp acts as a targeting signal to indicate that the lipoprotein should stay in the inner membrane). The sequence is that of Outer-membrane lipoprotein carrier protein from Legionella pneumophila (strain Corby).